The chain runs to 96 residues: MDMKKLMKQMQQAQVAAGKIQDELAAQSVEGTASGLVTVQMNGHGKVTSLKIKPEAVDGDDVEALEDLILAAINDAAEKAEGLQREATAGLGLPGF.

This sequence belongs to the YbaB/EbfC family. Homodimer.

It is found in the cytoplasm. The protein resides in the nucleoid. Binds to DNA and alters its conformation. May be involved in regulation of gene expression, nucleoid organization and DNA protection. In Deinococcus radiodurans (strain ATCC 13939 / DSM 20539 / JCM 16871 / CCUG 27074 / LMG 4051 / NBRC 15346 / NCIMB 9279 / VKM B-1422 / R1), this protein is Nucleoid-associated protein DR_0199.